The primary structure comprises 83 residues: Small ribosomal subunit protein bS20 (83 aa).

The segment at 1–25 (MPNIKSAIKRVNTTHTAEERNISQK) is disordered. Residues 16–25 (TAEERNISQK) are compositionally biased toward basic and acidic residues.

Belongs to the bacterial ribosomal protein bS20 family.

In terms of biological role, binds directly to 16S ribosomal RNA. The sequence is that of Small ribosomal subunit protein bS20 from Staphylococcus saprophyticus subsp. saprophyticus (strain ATCC 15305 / DSM 20229 / NCIMB 8711 / NCTC 7292 / S-41).